We begin with the raw amino-acid sequence, 334 residues long: Malate dehydrogenase, cytoplasmic (334 aa).

At serine 2 the chain carries N-acetylserine. NAD(+) contacts are provided by residues 11-17 (GAAGQIA) and aspartate 42. Positions 92 and 98 each coordinate substrate. Asparagine 105 lines the NAD(+) pocket. Position 110 is an N6-succinyllysine (lysine 110). Position 112 (glutamine 112) interacts with NAD(+). 2 positions are modified to N6-acetyllysine: lysine 118 and lysine 121. 129 to 131 (VGN) contributes to the NAD(+) binding site. Substrate-binding residues include asparagine 131 and arginine 162. Histidine 187 functions as the Proton acceptor in the catalytic mechanism. Lysine 214 carries the N6-succinyllysine modification. Position 217 is a phosphoserine (serine 217). Position 230 is an omega-N-methylarginine (arginine 230). Serine 241 bears the Phosphoserine mark. The residue at position 298 (lysine 298) is an N6-acetyllysine; alternate. Lysine 298 is subject to N6-succinyllysine; alternate. A Phosphoserine modification is found at serine 309. Position 318 is an N6-succinyllysine (lysine 318). Serine 332 and serine 333 each carry phosphoserine.

Belongs to the LDH/MDH superfamily. MDH type 2 family. As to quaternary structure, homodimer. Post-translationally, ISGylated. Acetylation at Lys-118 dramatically enhances enzymatic activity and promotes adipogenic differentiation.

Its subcellular location is the cytoplasm. The protein resides in the cytosol. It catalyses the reaction (S)-malate + NAD(+) = oxaloacetate + NADH + H(+). The catalysed reaction is (2R)-2-hydroxy-3-(4-hydroxyphenyl)propanoate + NAD(+) = 3-(4-hydroxyphenyl)pyruvate + NADH + H(+). It carries out the reaction (S)-2-hydroxyglutarate + NAD(+) = 2-oxoglutarate + NADH + H(+). In terms of biological role, catalyzes the reduction of aromatic alpha-keto acids in the presence of NADH. Plays essential roles in the malate-aspartate shuttle and the tricarboxylic acid cycle, important in mitochondrial NADH supply for oxidative phosphorylation. Catalyzes the reduction of 2-oxoglutarate to 2-hydroxyglutarate, leading to elevated reactive oxygen species (ROS). The protein is Malate dehydrogenase, cytoplasmic (Mdh1) of Rattus norvegicus (Rat).